A 358-amino-acid polypeptide reads, in one-letter code: GDSL esterase/lipase At2g30220 (358 aa).

The first 22 residues, 1–22 (MYISKTIVFGLFVATLLVSCNA), serve as a signal peptide directing secretion. N-linked (GlcNAc...) asparagine glycosylation is present at N25. S40 functions as the Nucleophile in the catalytic mechanism. N-linked (GlcNAc...) asparagine glycosylation is found at N102 and N324. Active-site residues include D332 and H335.

Belongs to the 'GDSL' lipolytic enzyme family.

It localises to the secreted. The polypeptide is GDSL esterase/lipase At2g30220 (Arabidopsis thaliana (Mouse-ear cress)).